Here is a 249-residue protein sequence, read N- to C-terminus: Probable endopeptidase YafL (249 aa).

Residues 1 to 17 (MSLPSIPSFVLSGLLLI) form the signal peptide. Cysteine 18 carries N-palmitoyl cysteine lipidation. Cysteine 18 carries S-diacylglycerol cysteine lipidation. The region spanning 116–243 (HNITEVAIHR…DHFLGARRIL (128 aa)) is the NlpC/P60 domain. Catalysis depends on cysteine 147, which acts as the Nucleophile. Histidine 202 serves as the catalytic Proton acceptor. Residue glutamate 214 is part of the active site.

This sequence belongs to the peptidase C40 family.

Its subcellular location is the cell membrane. In Escherichia coli (strain K12), this protein is Probable endopeptidase YafL (yafL).